The following is a 571-amino-acid chain: Glutamate--tRNA ligase (571 aa).

The 'HIGH' region signature appears at 114–124 (PNPNGPWHVGH). The tract at residues 431–453 (KPLAGGPESASPPLHPNDEDRGR) is disordered.

This sequence belongs to the class-I aminoacyl-tRNA synthetase family. Glutamate--tRNA ligase type 2 subfamily.

The protein localises to the cytoplasm. It carries out the reaction tRNA(Glu) + L-glutamate + ATP = L-glutamyl-tRNA(Glu) + AMP + diphosphate. Its function is as follows. Catalyzes the attachment of glutamate to tRNA(Glu) in a two-step reaction: glutamate is first activated by ATP to form Glu-AMP and then transferred to the acceptor end of tRNA(Glu). This is Glutamate--tRNA ligase from Natronomonas pharaonis (strain ATCC 35678 / DSM 2160 / CIP 103997 / JCM 8858 / NBRC 14720 / NCIMB 2260 / Gabara) (Halobacterium pharaonis).